The primary structure comprises 602 residues: MQSERQKYIRNFSIVAHIDHGKSTLADRLIEATGTLTEREMDTQVLDNMDLEKERGITIKSQAVRLIYKRDTGEEYTLNLIDTPGHVDFNYEVSRSLAACEGAILVVDATQGIQAQTLANCYLALDNDLEIVPVINKIDLPSARPEEVKQEIEDVIGIEAEDAPLVSAKTGLNIKDALEAIVNKVPAPDGDEKAPLKALIFDSYYDSYKGVVCHIRVKEGAIKEGTEIKLMNTGKVYEVVEVGVFVPNYMPVDELKAGDVGYVTASIKNVRDARVGDTITEAKRSANEALSGYRPAVPMVFSGIYPVDGAKYEELKEALEKLQVNDAALSFEPETSIALGFGFRCGFLGLLHMDIIQERLEREFNLDIITTAPSVIYKITKTDGTLIELTNPTNMPSPSEIKLMEEPIVKSSIITPSDYVGAVMDLAQNRRGIFKDMQYLDTTRVSLNYEIPLNEIIYDFFDALKSRTRGYASFDYELIGYKDADLVKLDILLNADVVDALSMIVPRERAYAKGRNMAQKLKEIIPRQMFEIPIQAAVGAKIIARETIKAMRKDVLAKCYGGDISRKRKLLEKQKEGKKRMRQVGSVEVPQEAFMAVLKTEE.

The tr-type G domain maps to 7 to 189; that stretch reads KYIRNFSIVA…AIVNKVPAPD (183 aa). GTP-binding positions include 19-24 and 136-139; these read DHGKST and NKID.

It belongs to the TRAFAC class translation factor GTPase superfamily. Classic translation factor GTPase family. LepA subfamily.

The protein resides in the cell membrane. It carries out the reaction GTP + H2O = GDP + phosphate + H(+). Functionally, required for accurate and efficient protein synthesis under certain stress conditions. May act as a fidelity factor of the translation reaction, by catalyzing a one-codon backward translocation of tRNAs on improperly translocated ribosomes. Back-translocation proceeds from a post-translocation (POST) complex to a pre-translocation (PRE) complex, thus giving elongation factor G a second chance to translocate the tRNAs correctly. Binds to ribosomes in a GTP-dependent manner. This is Elongation factor 4 from Clostridium botulinum (strain ATCC 19397 / Type A).